The primary structure comprises 322 residues: Acetyl-coenzyme A carboxylase carboxyl transferase subunit alpha (322 aa).

One can recognise a CoA carboxyltransferase C-terminal domain in the interval 32–293 (DISEEIARLE…KRALQDALRQ (262 aa)).

The protein belongs to the AccA family. As to quaternary structure, acetyl-CoA carboxylase is a heterohexamer composed of biotin carboxyl carrier protein (AccB), biotin carboxylase (AccC) and two subunits each of ACCase subunit alpha (AccA) and ACCase subunit beta (AccD).

Its subcellular location is the cytoplasm. It carries out the reaction N(6)-carboxybiotinyl-L-lysyl-[protein] + acetyl-CoA = N(6)-biotinyl-L-lysyl-[protein] + malonyl-CoA. It functions in the pathway lipid metabolism; malonyl-CoA biosynthesis; malonyl-CoA from acetyl-CoA: step 1/1. In terms of biological role, component of the acetyl coenzyme A carboxylase (ACC) complex. First, biotin carboxylase catalyzes the carboxylation of biotin on its carrier protein (BCCP) and then the CO(2) group is transferred by the carboxyltransferase to acetyl-CoA to form malonyl-CoA. This chain is Acetyl-coenzyme A carboxylase carboxyl transferase subunit alpha, found in Aromatoleum aromaticum (strain DSM 19018 / LMG 30748 / EbN1) (Azoarcus sp. (strain EbN1)).